The chain runs to 415 residues: Putative competence-damage inducible protein (415 aa).

This sequence belongs to the CinA family.

The chain is Putative competence-damage inducible protein from Listeria welshimeri serovar 6b (strain ATCC 35897 / DSM 20650 / CCUG 15529 / CIP 8149 / NCTC 11857 / SLCC 5334 / V8).